Consider the following 95-residue polypeptide: Small ribosomal subunit protein uS19 (95 aa).

The protein belongs to the universal ribosomal protein uS19 family.

In terms of biological role, protein S19 forms a complex with S13 that binds strongly to the 16S ribosomal RNA. The protein is Small ribosomal subunit protein uS19 of Roseiflexus castenholzii (strain DSM 13941 / HLO8).